The chain runs to 353 residues: Photosystem II protein D1 (353 aa).

N-acetylthreonine is present on threonine 2. Phosphothreonine is present on threonine 2. A run of 3 helical transmembrane segments spans residues 29–46, 118–133, and 142–156; these read YIGW…TATS, HFLL…EWEL, and WIAV…AATA. Histidine 118 serves as a coordination point for chlorophyll a. Tyrosine 126 is a binding site for pheophytin a. The [CaMn4O5] cluster site is built by aspartate 170 and glutamate 189. The chain crosses the membrane as a helical span at residues 197–218; the sequence is FHMLGVAGVFGGSLFSAMHGSL. Histidine 198 lines the chlorophyll a pocket. Residues histidine 215 and 264–265 each bind a quinone; that span reads SF. Position 215 (histidine 215) interacts with Fe cation. Histidine 272 lines the Fe cation pocket. The helical transmembrane segment at 274–288 threads the bilayer; sequence FLAAWPVVGIWFTAL. Residues histidine 332, glutamate 333, aspartate 342, and alanine 344 each coordinate [CaMn4O5] cluster. The propeptide occupies 345-353; that stretch reads SIEAPLVNG.

This sequence belongs to the reaction center PufL/M/PsbA/D family. As to quaternary structure, PSII is composed of 1 copy each of membrane proteins PsbA, PsbB, PsbC, PsbD, PsbE, PsbF, PsbH, PsbI, PsbJ, PsbK, PsbL, PsbM, PsbT, PsbX, PsbY, PsbZ, Psb30/Ycf12, at least 3 peripheral proteins of the oxygen-evolving complex and a large number of cofactors. It forms dimeric complexes. The D1/D2 heterodimer binds P680, chlorophylls that are the primary electron donor of PSII, and subsequent electron acceptors. It shares a non-heme iron and each subunit binds pheophytin, quinone, additional chlorophylls, carotenoids and lipids. D1 provides most of the ligands for the Mn4-Ca-O5 cluster of the oxygen-evolving complex (OEC). There is also a Cl(-1) ion associated with D1 and D2, which is required for oxygen evolution. The PSII complex binds additional chlorophylls, carotenoids and specific lipids. serves as cofactor. Post-translationally, tyr-161 forms a radical intermediate that is referred to as redox-active TyrZ, YZ or Y-Z. C-terminally processed by CTPA; processing is essential to allow assembly of the oxygen-evolving complex and thus photosynthetic growth.

It localises to the plastid. Its subcellular location is the chloroplast thylakoid membrane. The catalysed reaction is 2 a plastoquinone + 4 hnu + 2 H2O = 2 a plastoquinol + O2. Functionally, photosystem II (PSII) is a light-driven water:plastoquinone oxidoreductase that uses light energy to abstract electrons from H(2)O, generating O(2) and a proton gradient subsequently used for ATP formation. It consists of a core antenna complex that captures photons, and an electron transfer chain that converts photonic excitation into a charge separation. The D1/D2 (PsbA/PsbD) reaction center heterodimer binds P680, the primary electron donor of PSII as well as several subsequent electron acceptors. The sequence is that of Photosystem II protein D1 from Psilotum nudum (Whisk fern).